A 1298-amino-acid chain; its full sequence is Activating molecule in BECN1-regulated autophagy protein 1 (1298 aa).

Positions 1–22 (MKVVPEKNAVRILWGRERGARA) are interaction with DDB1. A Glycyl lysine isopeptide (Lys-Gly) (interchain with G-Cter in ubiquitin) cross-link involves residue Lys-45. WD repeat units lie at residues 51 to 90 (DSPRSTFLLAFSPDRTLLASTHVNHNIYITEVKTGKCVHS), 93 to 133 (GHRR…ESWF), and 135 to 175 (DSNN…AVVK). Phosphoserine; by MTOR is present on Ser-52. Residues 254-266 (IQVGEQSTVQDSA) show a composition bias toward polar residues. Residues 254–284 (IQVGEQSTVQDSATPSPPPPPPQPSTERPRT) form a disordered region. The segment covering 268 to 277 (PSPPPPPPQP) has biased composition (pro residues). The short motif at 275–281 (PQPSTER) is the PxP motif 1 element. Ser-328 bears the Phosphoserine mark. Positions 343 to 413 (FVQTEPFHPP…SRYHREIAPG (71 aa)) are disordered. The span at 354 to 385 (QASSTQQDQGLLNRPSAFSTVQSSTAGNTLRN) shows a compositional bias: polar residues. Phosphoserine is present on residues Ser-394 and Ser-443. Composition is skewed to polar residues over residues 458–467 (SQASVYTSAT), 547–561 (HQPTPHSSENNSNLS), and 590–601 (NYSSGEASSSWQ). Disordered regions lie at residues 458-494 (SQASVYTSATEGRGFPASGLATESDGGNGSSQNNSGS), 538-561 (IESERPGPSHQPTPHSSENNSNLS), 590-690 (NYSS…DSLR), and 747-796 (RYQQ…NARM). Composition is skewed to low complexity over residues 602 to 614 (VPSSFESVPSSGS) and 628 to 639 (SSSRLELSSSAS). A phosphoserine mark is found at Ser-635 and Ser-639. Over residues 661–674 (YTQSSRSGTVSQEA) the composition is skewed to polar residues. Position 747 is an asymmetric dimethylarginine (Arg-747). The span at 772-781 (TDLEFEDFED) shows a compositional bias: acidic residues. Ser-1043 is modified (phosphoserine; by IKKA). Positions 1043-1052 (SGVEYYWDQL) match the LIR motif. Residues 1060-1075 (HSNSRSSERPGTSRAT) are compositionally biased toward polar residues. The tract at residues 1060 to 1079 (HSNSRSSERPGTSRATWRTD) is disordered. 2 consecutive short sequence motifs (TQT motif) follow at residues 1104-1106 (TQT) and 1116-1118 (TQT). 3 disordered regions span residues 1112 to 1143 (QNAETQTEREVPEPGTAASGPGEGEGSEYGAS), 1190 to 1214 (RSSQTGTEPGAAHTSSPQPSTSRGL), and 1227 to 1298 (SPRT…PRNR). Positions 1191-1212 (SSQTGTEPGAAHTSSPQPSTSR) are enriched in polar residues. A Phosphoserine modification is found at Ser-1205. Positions 1206-1212 (PQPSTSR) match the PxP motif 2 motif.

It belongs to the WD repeat AMBRA1 family. In terms of assembly, component of the DCX(AMBRA1) E3 ubiquitin ligase complex, also named CRL4(AMBRA1), at least composed of CUL4 (CUL4A or CUL4B), DDB1, AMBRA1 and RBX1. Interacts with BECN1. Probably forms a complex with BECN1 and PIK3C3. Interacts with BECN2. Interacts with BCL2; leading to prevent interaction with BCN1 and autophagy, interaction is disrupted upon autophagy induction. Interacts with ULK1. Interacts (via PxP motifs) with PPP2CA; enhancing interaction between PPP2CA and MYC or FOXO3. Forms a complex with PPP2CA and BECN1; AMBRA1 and BECN1 components of the complex regulate MYC stability via different pathways. Interacts (TQT motifs) with DYNLL1 and DYNLL2; tethering AMBRA1 and the BECN1-PIK3C3 complex in absence of autophagy. Interacts with TRAF6; interaction is required to mediate 'Lys-63'-linked ubiquitination of ULK1. Interacts with TRIM32; promoting activation of ULK1 by TRIM32 via unanchored 'Lys-63'-linked polyubiquitin chains. Interacts with PRKN. Interacts (via LIR motif) with LC3 (MAP1LC3A, MAP1LC3B or MAP1LC3C). Interacts with HUWE1. Interacts with PTK2/FAK. Interacts with SRC; required for SRC trafficking to autophagosomes. In terms of processing, phosphorylation at Ser-52 by MTOR inhibits its ability to regulate autophagy and mediate ubiquitination of ULK1. Phosphorylation by ULK1 in response to autophagy induction abolishes interaction with DYNLL1 and DYNLL2, releasing AMBRA1 from the cytoskeletal docking site to induce autophagosome nucleation. Phosphorylation by MTOR inhibits interaction with PPP2CA and subsequent dephosphorylation of MYC. Phosphorylation at Ser-1043 by CHUK/IKKA promotes its interaction with ATG8 family proteins GABARAP and MAP1LC3B and its mitophagic activity. Post-translationally, ubiquitinated by RNF2 via 'Lys-48'-linkage in unstressed cells, leading to its degradation by the proteasome. Induction of autophagy promotes stabilization via interaction with CUL4 (CUL4A or CUL4B) and DDB1. Upon prolonged starvation, ubiquitinated and degraded, terminating the autophagy response. Undergoes proteolytic processing by caspase-6 (CASP6), caspase-7 (CASP7) and caspase-8 (CASP8) during apoptosis, resulting in the dismantling of the autophagic machinery and the accomplishment of the programmed cell death program. Also cleaved by calpains during apoptosis, which mediate a complete proteolytic degradation.

It localises to the endoplasmic reticulum. Its subcellular location is the cytoplasm. It is found in the cytoskeleton. The protein resides in the cytoplasmic vesicle. The protein localises to the autophagosome. It localises to the mitochondrion. Its subcellular location is the cytosol. It is found in the nucleus. The protein resides in the cell junction. The protein localises to the focal adhesion. It functions in the pathway protein modification; protein ubiquitination. Its function is as follows. Substrate-recognition component of a DCX (DDB1-CUL4-X-box) E3 ubiquitin-protein ligase complex involved in cell cycle control and autophagy. The DCX(AMBRA1) complex specifically mediates the polyubiquitination of target proteins such as BECN1, CCND1, CCND2, CCND3, ELOC and ULK1. Acts as an upstream master regulator of the transition from G1 to S cell phase: AMBRA1 specifically recognizes and binds phosphorylated cyclin-D (CCND1, CCND2 and CCND3), leading to cyclin-D ubiquitination by the DCX(AMBRA1) complex and subsequent degradation. By controlling the transition from G1 to S phase and cyclin-D degradation, AMBRA1 acts as a tumor suppressor that promotes genomic integrity during DNA replication and counteracts developmental abnormalities and tumor growth. AMBRA1 also regulates the cell cycle by promoting MYC dephosphorylation and degradation independently of the DCX(AMBRA1) complex: acts via interaction with the catalytic subunit of protein phosphatase 2A (PPP2CA), which enhances interaction between PPP2CA and MYC, leading to MYC dephosphorylation and degradation. Acts as a regulator of Cul5-RING (CRL5) E3 ubiquitin-protein ligase complexes by mediating ubiquitination and degradation of Elongin-C (ELOC) component of CRL5 complexes. Acts as a key regulator of autophagy by modulating the BECN1-PIK3C3 complex: controls protein turnover during neuronal development, and regulates normal cell survival and proliferation. In normal conditions, AMBRA1 is tethered to the cytoskeleton via interaction with dyneins DYNLL1 and DYNLL2. Upon autophagy induction, AMBRA1 is released from the cytoskeletal docking site to induce autophagosome nucleation by mediating ubiquitination of proteins involved in autophagy. The DCX(AMBRA1) complex mediates 'Lys-63'-linked ubiquitination of BECN1, increasing the association between BECN1 and PIK3C3 to promote PIK3C3 activity. In collaboration with TRAF6, AMBRA1 mediates 'Lys-63'-linked ubiquitination of ULK1 following autophagy induction, promoting ULK1 stability and kinase activity. Also activates ULK1 via interaction with TRIM32: TRIM32 stimulates ULK1 through unanchored 'Lys-63'-linked polyubiquitin chains. Also acts as an activator of mitophagy via interaction with PRKN and LC3 proteins (MAP1LC3A, MAP1LC3B or MAP1LC3C); possibly by bringing damaged mitochondria onto autophagosomes. Also activates mitophagy by acting as a cofactor for HUWE1; acts by promoting HUWE1-mediated ubiquitination of MFN2. AMBRA1 is also involved in regulatory T-cells (Treg) differentiation by promoting FOXO3 dephosphorylation independently of the DCX(AMBRA1) complex: acts via interaction with PPP2CA, which enhances interaction between PPP2CA and FOXO3, leading to FOXO3 dephosphorylation and stabilization. May act as a regulator of intracellular trafficking, regulating the localization of active PTK2/FAK and SRC. Also involved in transcription regulation by acting as a scaffold for protein complexes at chromatin. The protein is Activating molecule in BECN1-regulated autophagy protein 1 of Homo sapiens (Human).